Here is a 703-residue protein sequence, read N- to C-terminus: Pinin (703 aa).

N-acetylalanine is present on Ala2. Residues 2–32 (AVAVRTLQEQLEKAKESLKNVDENIRKLTGR) are a coiled coil. Residues 46 to 148 (ALSGPGGGRG…ETPERPGPIF (103 aa)) form a disordered region. A Phosphoserine modification is found at Ser48. Residue Arg54 is modified to Omega-N-methylarginine. A phosphoserine mark is found at Ser58, Ser66, Ser96, and Ser100. A compositionally biased stretch (basic and acidic residues) spans 87–100 (GGERRTRRESRQES). Residue Lys109 forms a Glycyl lysine isopeptide (Lys-Gly) (interchain with G-Cter in SUMO2) linkage. Phosphoserine is present on residues Ser114 and Ser115. Lys121 participates in a covalent cross-link: Glycyl lysine isopeptide (Lys-Gly) (interchain with G-Cter in SUMO2). The residue at position 125 (Thr125) is a Phosphothreonine. Glycyl lysine isopeptide (Lys-Gly) (interchain with G-Cter in SUMO2) cross-links involve residues Lys138 and Lys157. Lys159 participates in a covalent cross-link: Glycyl lysine isopeptide (Lys-Gly) (interchain with G-Cter in SUMO1); alternate. Residue Lys159 forms a Glycyl lysine isopeptide (Lys-Gly) (interchain with G-Cter in SUMO2); alternate linkage. Positions 165–236 (ATERQKRRQE…HNAKIIKYIR (72 aa)) form a coiled coil. Residues 223-285 (EWNEHNAKII…AEQINKMEAR (63 aa)) are sufficient for PSAP complex assembly. Residue Lys230 forms a Glycyl lysine isopeptide (Lys-Gly) (interchain with G-Cter in SUMO2) linkage. Lys240 is modified (N6-acetyllysine; alternate). Lys240 carries the N6-succinyllysine; alternate modification. Glycyl lysine isopeptide (Lys-Gly) (interchain with G-Cter in SUMO2) cross-links involve residues Lys281, Lys306, and Lys313. Disordered regions lie at residues 284 to 314 (ARPRRQSMKEKEHQVVVRNEEQKSEQEEGKV), 331 to 394 (RVGT…EEVM), and 408 to 703 (AEQE…PGQL). Composition is skewed to basic and acidic residues over residues 348 to 357 (EIPIVHSDAE) and 366 to 386 (KQEMEVKMEEETEVRESEKQQ). The residue at position 354 (Ser354) is a Phosphoserine. Residues 354–411 (SDAEKEQEEEEQKQEMEVKMEEETEVRESEKQQDSQPEEVMDVLEMVESVKNVIAEQE) are a coiled coil. Residues Lys366 and Lys372 each participate in a glycyl lysine isopeptide (Lys-Gly) (interchain with G-Cter in SUMO2) cross-link. Phosphoserine is present on residues Ser382 and Ser388. The span at 417 to 433 (QVERVEPSENEASKELE) shows a compositional bias: basic and acidic residues. Phosphoserine occurs at positions 450 and 457. Residues 479-489 (PMAQPQAQSLP) are compositionally biased toward low complexity. Residues Lys541 and Lys549 each participate in a glycyl lysine isopeptide (Lys-Gly) (interchain with G-Cter in SUMO2) cross-link. Position 565 is a phosphoserine (Ser565). Lys566 is covalently cross-linked (Glycyl lysine isopeptide (Lys-Gly) (interchain with G-Cter in SUMO2)). Residues 572-588 (RSRSRGRARNRTSKSRS) show a composition bias toward basic residues. Residues 589–642 (RSSSSSSSSSSSTSSSSGSSSSSGSSSSRTSSSSSSTSGSSSRDSSSSTTSSSE) are compositionally biased toward low complexity. The span at 646-664 (RSRGRGHNRDRKHRRSVDR) shows a compositional bias: basic residues. Residues 665–676 (KRRDASGLERSH) show a composition bias toward basic and acidic residues. 2 positions are modified to phosphoserine: Ser670 and Ser691.

Belongs to the pinin family. As to quaternary structure, found in a mRNA splicing-dependent exon junction complex (EJC). Found in a complex with SR proteins. Found in a mRNP complex with RNPS1. Component of the PSAP complex consisting of RNPS1, SAP18 and PNN. Interacts with PNISR, CTBP1, CTBP2, KRT8, KRT18, KRT19, PS1D/PNO40, PPIG, RNPS1, SFRS4 and SRRM2. Identified in the spliceosome C complex.

The protein resides in the nucleus speckle. It localises to the cell junction. Its subcellular location is the desmosome. Transcriptional activator binding to the E-box 1 core sequence of the E-cadherin promoter gene; the core-binding sequence is 5'CAGGTG-3'. Capable of reversing CTBP1-mediated transcription repression. Auxiliary component of the splicing-dependent multiprotein exon junction complex (EJC) deposited at splice junction on mRNAs. The EJC is a dynamic structure consisting of core proteins and several peripheral nuclear and cytoplasmic associated factors that join the complex only transiently either during EJC assembly or during subsequent mRNA metabolism. Participates in the regulation of alternative pre-mRNA splicing. Associates to spliced mRNA within 60 nt upstream of the 5'-splice sites. Component of the PSAP complex which binds RNA in a sequence-independent manner and is proposed to be recruited to the EJC prior to or during the splicing process and to regulate specific excision of introns in specific transcription subsets. Involved in the establishment and maintenance of epithelia cell-cell adhesion. This Bos taurus (Bovine) protein is Pinin (PNN).